A 213-amino-acid chain; its full sequence is Kynurenine formamidase (213 aa).

Trp-18 contributes to the substrate binding site. Residues His-48, His-52, and Asp-54 each contribute to the Zn(2+) site. Residue His-58 is the Proton donor/acceptor of the active site. Zn(2+) is bound by residues His-160 and Glu-172.

It belongs to the Cyclase 1 superfamily. KynB family. In terms of assembly, homodimer. Zn(2+) serves as cofactor.

The enzyme catalyses N-formyl-L-kynurenine + H2O = L-kynurenine + formate + H(+). Its pathway is amino-acid degradation; L-tryptophan degradation via kynurenine pathway; L-kynurenine from L-tryptophan: step 2/2. Its function is as follows. Catalyzes the hydrolysis of N-formyl-L-kynurenine to L-kynurenine, the second step in the kynurenine pathway of tryptophan degradation. In Burkholderia vietnamiensis (strain G4 / LMG 22486) (Burkholderia cepacia (strain R1808)), this protein is Kynurenine formamidase.